The chain runs to 891 residues: Transportin-1 (891 aa).

HEAT repeat units lie at residues Gly14 to Gln40, Phe45 to Ser83, Tyr92 to Val125, Leu131 to Asp168, Asn178 to Val208, Tyr221 to Ile248, Lys260 to Ala287, Pro303 to Val381, Thr389 to Ala420, Pro432 to Arg459, Phe477 to Ala510, Leu518 to Val551, Lys559 to Gly597, Glu605 to Ala653, Leu664 to Pro695, Gln703 to Gly740, Ile748 to Pro784, Asp792 to Asn825, and Thr834 to Leu866. The 69-residue stretch at Ile35–Ala103 folds into the Importin N-terminal domain. Acidic residues predominate over residues Asp317–Ser330. A disordered region spans residues Asp317–Asp337.

The protein belongs to the importin beta family. Importin beta-2 subfamily.

The protein resides in the cytoplasm. It is found in the nucleus. Its subcellular location is the nucleoplasm. Its function is as follows. Functions in nuclear protein import as nuclear transport receptor. Serves as receptor for nuclear localization signals (NLS) in cargo substrates. Is thought to mediate docking of the importin/substrate complex to the nuclear pore complex (NPC) through binding to nucleoporin and the complex is subsequently translocated through the pore by an energy requiring, Ran-dependent mechanism. At the nucleoplasmic side of the NPC, Ran binds to the importin, the importin/substrate complex dissociates and importin is re-exported from the nucleus to the cytoplasm where GTP hydrolysis releases Ran. The directionality of nuclear import is thought to be conferred by an asymmetric distribution of the GTP- and GDP-bound forms of Ran between the cytoplasm and nucleus. The chain is Transportin-1 (TRN1) from Oryza sativa subsp. japonica (Rice).